The following is a 172-amino-acid chain: Ribosome maturation factor RimP (172 aa).

It belongs to the RimP family.

It is found in the cytoplasm. Functionally, required for maturation of 30S ribosomal subunits. The protein is Ribosome maturation factor RimP of Nitratidesulfovibrio vulgaris (strain ATCC 29579 / DSM 644 / CCUG 34227 / NCIMB 8303 / VKM B-1760 / Hildenborough) (Desulfovibrio vulgaris).